Consider the following 483-residue polypeptide: Dual specificity protein phosphatase 10 (483 aa).

A Rhodanese domain is found at 169–286 (PSQGPVIIDC…FKQNHGNLCD (118 aa)). The segment at 200 to 216 (KISRRRLQQGKITVLDL) is interaction with MAP kinases. The Tyrosine-protein phosphatase domain occupies 322-465 (ELTPILPFLF…LLEFEEDLNN (144 aa)). The Phosphocysteine intermediate role is filled by C409.

Belongs to the protein-tyrosine phosphatase family. Non-receptor class dual specificity subfamily. Monomer. Interacts with MAPK14.

The protein resides in the cytoplasm. The protein localises to the nucleus. It carries out the reaction O-phospho-L-tyrosyl-[protein] + H2O = L-tyrosyl-[protein] + phosphate. The enzyme catalyses O-phospho-L-seryl-[protein] + H2O = L-seryl-[protein] + phosphate. It catalyses the reaction O-phospho-L-threonyl-[protein] + H2O = L-threonyl-[protein] + phosphate. Functionally, protein phosphatase involved in the inactivation of MAP kinases. Has a specificity for the MAPK11/MAPK12/MAPK13/MAPK14 subfamily. It preferably dephosphorylates p38. In Mus musculus (Mouse), this protein is Dual specificity protein phosphatase 10 (Dusp10).